A 252-amino-acid polypeptide reads, in one-letter code: uncharacterized protein (252 aa).

This is an uncharacterized protein from Rickettsia prowazekii (strain Madrid E).